Reading from the N-terminus, the 305-residue chain is Peroxisome biogenesis factor 2 (305 aa).

The Peroxisomal matrix segment spans residues 1-15; sequence MAAREESTQSANRVL. A helical transmembrane segment spans residues 16-42; sequence RISQLDALELNKALEQLVWSQFTQCFH. Topologically, residues 43-48 are cytoplasmic; sequence GFKPGL. The chain crosses the membrane as a helical span at residues 49 to 74; that stretch reads LARFEPEVKAFLWLFLWRFTIYSKNA. Topologically, residues 75–98 are peroxisomal matrix; sequence TVGQSVLNIQYKNDSSPNPVYQPP. The chain crosses the membrane as a helical span at residues 99–125; that stretch reads SKNQKLLYAVCTIGGRWLEERCYDLFR. The Cytoplasmic portion of the chain corresponds to 126-133; sequence NRHLASFG. The helical transmembrane segment at 134–160 threads the bilayer; sequence KAKQCMNFVVGLLKLGELMNFLIFLQK. The Peroxisomal matrix segment spans residues 161 to 187; it reads GKFATLTERLLGIHSVFCKPQSMREVG. The helical transmembrane segment at 188–211 threads the bilayer; the sequence is FEYMNRELLWHGFAEFLVFLLPLI. The Cytoplasmic portion of the chain corresponds to 212-305; sequence NIQKLKAKLS…GIEMSEVNAL (94 aa). The Zn(2+) site is built by cysteine 244, cysteine 247, cysteine 259, histidine 261, cysteine 264, cysteine 267, cysteine 280, and cysteine 283. Residues 244–284 form an RING-type zinc finger; the sequence is CALCGEWPTMPHTIGCEHVFCYYCVKSSFLFDMYFTCPKCG.

It belongs to the pex2/pex10/pex12 family. In terms of assembly, component of the PEX2-PEX10-PEX12 retrotranslocation channel, composed of PEX2, PEX10 and PEX12. In terms of processing, forms intramolecular and intermolecular disulfide bonds in response to reactive oxygen species (ROS), promoting higher stability.

The protein resides in the peroxisome membrane. It catalyses the reaction [E2 ubiquitin-conjugating enzyme]-S-ubiquitinyl-L-cysteine + [acceptor protein]-L-cysteine = [E2 ubiquitin-conjugating enzyme]-L-cysteine + [acceptor protein]-S-ubiquitinyl-L-cysteine.. The catalysed reaction is S-ubiquitinyl-[E2 ubiquitin-conjugating enzyme]-L-cysteine + [acceptor protein]-L-lysine = [E2 ubiquitin-conjugating enzyme]-L-cysteine + N(6)-ubiquitinyl-[acceptor protein]-L-lysine.. It functions in the pathway protein modification; protein ubiquitination. Functionally, E3 ubiquitin-protein ligase component of a retrotranslocation channel required for peroxisome organization by mediating export of the PEX5 receptor from peroxisomes to the cytosol, thereby promoting PEX5 recycling. The retrotranslocation channel is composed of PEX2, PEX10 and PEX12; each subunit contributing transmembrane segments that coassemble into an open channel that specifically allows the passage of PEX5 through the peroxisomal membrane. PEX2 also regulates peroxisome organization by acting as a E3 ubiquitin-protein ligase. PEX2 ubiquitinates PEX5 during its passage through the retrotranslocation channel: catalyzes monoubiquitination of PEX5 at 'Cys-11', a modification that acts as a signal for PEX5 extraction into the cytosol. Required for pexophagy in response to starvation by mediating ubiquitination of peroxisomal proteins, such as PEX5 and ABCD3/PMP70. Also involved in the response to reactive oxygen species (ROS) by mediating 'Lys-48'-linked polyubiquitination and subsequent degradation of PNPLA2/ATGL, thereby regulating lipolysis. In Rattus norvegicus (Rat), this protein is Peroxisome biogenesis factor 2 (Pex2).